The sequence spans 492 residues: Cysteine--tRNA ligase (492 aa).

Cys35 lines the Zn(2+) pocket. Positions 37-47 match the 'HIGH' region motif; sequence PTVYSNVHLGN. The Zn(2+) site is built by Cys230, His255, and Glu259. The short motif at 287 to 291 is the 'KMSKS' region element; it reads KMAKS. Residue Lys290 coordinates ATP.

This sequence belongs to the class-I aminoacyl-tRNA synthetase family. Monomer. The cofactor is Zn(2+).

The protein resides in the cytoplasm. The catalysed reaction is tRNA(Cys) + L-cysteine + ATP = L-cysteinyl-tRNA(Cys) + AMP + diphosphate. This chain is Cysteine--tRNA ligase, found in Flavobacterium johnsoniae (strain ATCC 17061 / DSM 2064 / JCM 8514 / BCRC 14874 / CCUG 350202 / NBRC 14942 / NCIMB 11054 / UW101) (Cytophaga johnsonae).